We begin with the raw amino-acid sequence, 259 residues long: tRNA (guanine-N(7)-)-methyltransferase (259 aa).

S-adenosyl-L-methionine contacts are provided by residues Gly-80, 103–104, 136–137, and Leu-156; these read EL and NS. The active site involves Asp-159. 234 to 236 contacts S-adenosyl-L-methionine; the sequence is TEE.

It belongs to the class I-like SAM-binding methyltransferase superfamily. TrmB family.

It localises to the nucleus. It catalyses the reaction guanosine(46) in tRNA + S-adenosyl-L-methionine = N(7)-methylguanosine(46) in tRNA + S-adenosyl-L-homocysteine. It participates in tRNA modification; N(7)-methylguanine-tRNA biosynthesis. Functionally, catalyzes the formation of N(7)-methylguanine at position 46 (m7G46) in tRNA. The protein is tRNA (guanine-N(7)-)-methyltransferase of Oryza sativa subsp. indica (Rice).